We begin with the raw amino-acid sequence, 277 residues long: Large ribosomal subunit protein uL2 (277 aa).

The disordered stretch occupies residues 222 to 277; sequence GVAMNPVDHPHGGGEGRTSGGRHPVTPWGKPTKGKKTRSNKATDKFIMRSRHQRKK.

This sequence belongs to the universal ribosomal protein uL2 family. In terms of assembly, part of the 50S ribosomal subunit. Forms a bridge to the 30S subunit in the 70S ribosome.

One of the primary rRNA binding proteins. Required for association of the 30S and 50S subunits to form the 70S ribosome, for tRNA binding and peptide bond formation. It has been suggested to have peptidyltransferase activity; this is somewhat controversial. Makes several contacts with the 16S rRNA in the 70S ribosome. The chain is Large ribosomal subunit protein uL2 from Brucella melitensis biotype 1 (strain ATCC 23456 / CCUG 17765 / NCTC 10094 / 16M).